The following is a 249-amino-acid chain: ATP synthase subunit a (249 aa).

A run of 6 helical transmembrane segments spans residues 30–50 (QSPV…YVGM), 86–106 (FFPF…LGLL), 115–135 (HIAV…IVSL), 142–162 (FFAH…LVPI), 191–211 (MFAA…VLAV), and 218–238 (VALM…FAIL).

The protein belongs to the ATPase A chain family. As to quaternary structure, F-type ATPases have 2 components, CF(1) - the catalytic core - and CF(0) - the membrane proton channel. CF(1) has five subunits: alpha(3), beta(3), gamma(1), delta(1), epsilon(1). CF(0) has three main subunits: a(1), b(2) and c(9-12). The alpha and beta chains form an alternating ring which encloses part of the gamma chain. CF(1) is attached to CF(0) by a central stalk formed by the gamma and epsilon chains, while a peripheral stalk is formed by the delta and b chains.

Its subcellular location is the cell inner membrane. Key component of the proton channel; it plays a direct role in the translocation of protons across the membrane. The sequence is that of ATP synthase subunit a from Gluconacetobacter diazotrophicus (strain ATCC 49037 / DSM 5601 / CCUG 37298 / CIP 103539 / LMG 7603 / PAl5).